The primary structure comprises 306 residues: Probable L,D-transpeptidase YbiS (306 aa).

The N-terminal stretch at 1–24 (MNMKLKTLFAAAFAVVGFCSTASA) is a signal peptide. The 136-residue stretch at 99–234 (EGIVINSAEM…VPVGTRVQFI (136 aa)) folds into the L,D-TPase catalytic domain. H194 serves as the catalytic Proton donor/acceptor. C210 (nucleophile) is an active-site residue.

It belongs to the YkuD family.

It localises to the periplasm. It participates in cell wall biogenesis; peptidoglycan biosynthesis. In terms of biological role, responsible, at least in part, for anchoring of the major outer membrane lipoprotein (Lpp) to the peptidoglycan via a meso-diaminopimelyl-L-Lys- bond on the terminal residue of Lpp. The protein is Probable L,D-transpeptidase YbiS (ybiS) of Escherichia coli O6:H1 (strain CFT073 / ATCC 700928 / UPEC).